The sequence spans 368 residues: uncharacterized protein (368 aa).

It belongs to the Gfo/Idh/MocA family.

This is an uncharacterized protein from Schizosaccharomyces pombe (strain 972 / ATCC 24843) (Fission yeast).